Consider the following 302-residue polypeptide: tRNA dimethylallyltransferase (302 aa).

ATP is bound at residue 10-17 (GPTAIGKT). Residue 12-17 (TAIGKT) participates in substrate binding. Positions 35–38 (DSRQ) are interaction with substrate tRNA.

Belongs to the IPP transferase family. As to quaternary structure, monomer. The cofactor is Mg(2+).

The enzyme catalyses adenosine(37) in tRNA + dimethylallyl diphosphate = N(6)-dimethylallyladenosine(37) in tRNA + diphosphate. Functionally, catalyzes the transfer of a dimethylallyl group onto the adenine at position 37 in tRNAs that read codons beginning with uridine, leading to the formation of N6-(dimethylallyl)adenosine (i(6)A). The sequence is that of tRNA dimethylallyltransferase from Christiangramia forsetii (strain DSM 17595 / CGMCC 1.15422 / KT0803) (Gramella forsetii).